The sequence spans 298 residues: Small ribosomal subunit protein uS3m (298 aa).

This sequence belongs to the universal ribosomal protein uS3 family.

Its subcellular location is the mitochondrion. The chain is Small ribosomal subunit protein uS3m (RPS3) from Acanthamoeba castellanii (Amoeba).